A 123-amino-acid polypeptide reads, in one-letter code: uncharacterized protein (123 aa).

Residues 1–28 (MGLGSSKRKEEPPHKSEPKTVGRVKRAG) are disordered. A compositionally biased stretch (basic and acidic residues) spans 7 to 20 (KRKEEPPHKSEPKT).

It belongs to the TUSC2 family.

This is an uncharacterized protein from Caenorhabditis elegans.